The chain runs to 200 residues: Dephospho-CoA kinase (200 aa).

A DPCK domain is found at 3–200 (VLGLTGSIGM…LSGKPAAATR (198 aa)). Residue 11–16 (GMGKTT) participates in ATP binding.

Belongs to the CoaE family.

Its subcellular location is the cytoplasm. It catalyses the reaction 3'-dephospho-CoA + ATP = ADP + CoA + H(+). The protein operates within cofactor biosynthesis; coenzyme A biosynthesis; CoA from (R)-pantothenate: step 5/5. Catalyzes the phosphorylation of the 3'-hydroxyl group of dephosphocoenzyme A to form coenzyme A. The chain is Dephospho-CoA kinase from Brucella melitensis biotype 1 (strain ATCC 23456 / CCUG 17765 / NCTC 10094 / 16M).